The sequence spans 345 residues: DNA-directed RNA polymerase subunit alpha (345 aa).

The interval 1–233 is alpha N-terminal domain (alpha-NTD); sequence MVRNWCSLIR…KQLQVFVGLH (233 aa). An alpha C-terminal domain (alpha-CTD) region spans residues 256 to 345; sequence LNDILLRHVE…EEMGEIQEEG (90 aa).

The protein belongs to the RNA polymerase alpha chain family. As to quaternary structure, homodimer. The RNAP catalytic core consists of 2 alpha, 1 beta, 1 beta' and 1 omega subunit. When a sigma factor is associated with the core the holoenzyme is formed, which can initiate transcription.

The enzyme catalyses RNA(n) + a ribonucleoside 5'-triphosphate = RNA(n+1) + diphosphate. In terms of biological role, DNA-dependent RNA polymerase catalyzes the transcription of DNA into RNA using the four ribonucleoside triphosphates as substrates. This chain is DNA-directed RNA polymerase subunit alpha, found in Syntrophus aciditrophicus (strain SB).